An 89-amino-acid chain; its full sequence is MALSVEEKAQIVTDYQQAVGDTGSPEVQVALLTANINKLQGHFKANGKDHHSRRGLIRMVNQRRKLLDYLKGKDVSRYSALIGRLGLRR.

The protein belongs to the universal ribosomal protein uS15 family. In terms of assembly, part of the 30S ribosomal subunit. Forms a bridge to the 50S subunit in the 70S ribosome, contacting the 23S rRNA.

Functionally, one of the primary rRNA binding proteins, it binds directly to 16S rRNA where it helps nucleate assembly of the platform of the 30S subunit by binding and bridging several RNA helices of the 16S rRNA. Its function is as follows. Forms an intersubunit bridge (bridge B4) with the 23S rRNA of the 50S subunit in the ribosome. The chain is Small ribosomal subunit protein uS15 from Pseudomonas savastanoi pv. phaseolicola (strain 1448A / Race 6) (Pseudomonas syringae pv. phaseolicola (strain 1448A / Race 6)).